A 286-amino-acid chain; its full sequence is Lipid phosphate phosphatase epsilon 2, chloroplastic (286 aa).

The N-terminal 60 residues, 1–60 (MAASSSSLLLLHKPTYNFHFAASSVPTYINSARFRISSSIFPLDRRRRRRIWSVSGFKSM), are a transit peptide targeting the chloroplast. A run of 5 helical transmembrane segments spans residues 133-149 (LWAV…SVAL), 173-193 (AQSI…WLGT), 194-214 (NVLS…FTWL), 226-246 (VVVG…TWNS), and 260-280 (IALF…VLLN).

Belongs to the PA-phosphatase related phosphoesterase family. Expressed in root tips, root branch points, cotyledons and leaves.

The protein localises to the plastid. Its subcellular location is the chloroplast inner membrane. With respect to regulation, inhibited by Mg(2+). Exhibits phosphatidate phosphatase (PAP) activity in vitro. May play a secondary role as PAP in plastids. The protein is Lipid phosphate phosphatase epsilon 2, chloroplastic (LPPE2) of Arabidopsis thaliana (Mouse-ear cress).